The following is a 100-amino-acid chain: MTLFSSISSMSTSMSGSKSSIASFGSGTSMSSNSIACGGGCGGSGGILGSGLGLGLGLGLDLTGGSRSRGSCGGNRGNGNGNGGMGGGNGSCCGGPCCGI.

Disordered stretches follow at residues 1–29 (MTLFSSISSMSTSMSGSKSSIASFGSGTS) and 67–100 (RSRGSCGGNRGNGNGNGGMGGGNGSCCGGPCCGI). Positions 71–93 (SCGGNRGNGNGNGGMGGGNGSCC) are enriched in gly residues.

Belongs to the hssA/B family.

In Dictyostelium discoideum (Social amoeba), this protein is HssA/B-like protein 37 (hssl37).